The chain runs to 230 residues: Uracil-DNA glycosylase (230 aa).

Aspartate 70 (proton acceptor) is an active-site residue.

Belongs to the uracil-DNA glycosylase (UDG) superfamily. UNG family.

Its subcellular location is the cytoplasm. The catalysed reaction is Hydrolyzes single-stranded DNA or mismatched double-stranded DNA and polynucleotides, releasing free uracil.. Functionally, excises uracil residues from the DNA which can arise as a result of misincorporation of dUMP residues by DNA polymerase or due to deamination of cytosine. This Pseudomonas putida (strain ATCC 700007 / DSM 6899 / JCM 31910 / BCRC 17059 / LMG 24140 / F1) protein is Uracil-DNA glycosylase.